The primary structure comprises 105 residues: Small ribosomal subunit protein eS24 (105 aa).

Belongs to the eukaryotic ribosomal protein eS24 family.

In Ignicoccus hospitalis (strain KIN4/I / DSM 18386 / JCM 14125), this protein is Small ribosomal subunit protein eS24.